We begin with the raw amino-acid sequence, 67 residues long: Major cold shock protein (67 aa).

The CSD domain maps to 4 to 63 (GTVKWFNAEKGFGFISTENGQDVFAHFSAIQTSGFKTLEEGQKVAFDVEEGQRGPQAVNI).

As to quaternary structure, homodimer.

Its subcellular location is the cytoplasm. This chain is Major cold shock protein (cspA), found in Streptococcus pyogenes serotype M6 (strain ATCC BAA-946 / MGAS10394).